A 333-amino-acid chain; its full sequence is Ferredoxin--NADP reductase (333 aa).

FAD contacts are provided by D32, Q40, Y45, A85, F119, D285, and T326.

It belongs to the ferredoxin--NADP reductase type 2 family. In terms of assembly, homodimer. The cofactor is FAD.

It catalyses the reaction 2 reduced [2Fe-2S]-[ferredoxin] + NADP(+) + H(+) = 2 oxidized [2Fe-2S]-[ferredoxin] + NADPH. The sequence is that of Ferredoxin--NADP reductase from Neorickettsia sennetsu (strain ATCC VR-367 / Miyayama) (Ehrlichia sennetsu).